Reading from the N-terminus, the 114-residue chain is Ig kappa chain V-I region S107A (114 aa).

The tract at residues 1–23 (DIVMTQSPTFLAVTASKKVTISC) is framework-1. Cysteine 23 and cysteine 94 form a disulfide bridge. Residues 24-40 (TASESLYSSKHKVHYLA) form a complementarity-determining-1 region. The interval 41–55 (WYQKKPEQSPKLLIY) is framework-2. Residues 56 to 62 (GASNRYI) form a complementarity-determining-2 region. Residues 63-94 (GVPDRFTGSGSGTDFTLTISSVQVEDLTHYYC) are framework-3. A complementarity-determining-3 region spans residues 95 to 103 (AQFYSYPLT). The tract at residues 104-113 (FGAGTKLELK) is framework-4.

Anti-phosphocholine antibody. This chain is Ig kappa chain V-I region S107A (Igkv7-33), found in Mus musculus (Mouse).